Here is a 318-residue protein sequence, read N- to C-terminus: tRNA uridine(34) hydroxylase (318 aa).

The region spanning 123 to 217 (EDDDTVIIDA…YGKDPETKSE (95 aa)) is the Rhodanese domain. The active-site Cysteine persulfide intermediate is Cys177.

The protein belongs to the TrhO family.

It carries out the reaction uridine(34) in tRNA + AH2 + O2 = 5-hydroxyuridine(34) in tRNA + A + H2O. Functionally, catalyzes oxygen-dependent 5-hydroxyuridine (ho5U) modification at position 34 in tRNAs. This is tRNA uridine(34) hydroxylase from Staphylococcus aureus (strain COL).